The primary structure comprises 462 residues: Glycine--tRNA ligase (462 aa).

Substrate-binding residues include R100 and E175. ATP is bound by residues 207-209 (RNE), 217-222 (FRTREF), 291-292 (EL), and 335-338 (GADR). Position 222–226 (222–226 (FEQME)) interacts with substrate. 331–335 (EPSLG) lines the substrate pocket.

Belongs to the class-II aminoacyl-tRNA synthetase family. As to quaternary structure, homodimer.

The protein resides in the cytoplasm. It catalyses the reaction tRNA(Gly) + glycine + ATP = glycyl-tRNA(Gly) + AMP + diphosphate. Functionally, catalyzes the attachment of glycine to tRNA(Gly). The protein is Glycine--tRNA ligase of Clostridium acetobutylicum (strain ATCC 824 / DSM 792 / JCM 1419 / IAM 19013 / LMG 5710 / NBRC 13948 / NRRL B-527 / VKM B-1787 / 2291 / W).